Reading from the N-terminus, the 121-residue chain is Small ribosomal subunit protein uS12c (121 aa).

It belongs to the universal ribosomal protein uS12 family. As to quaternary structure, part of the 30S ribosomal subunit.

Its subcellular location is the plastid. The protein localises to the apicoplast. Functionally, with S4 and S5 plays an important role in translational accuracy. Located at the interface of the 30S and 50S subunits. This is Small ribosomal subunit protein uS12c (rps12) from Toxoplasma gondii.